The following is a 424-amino-acid chain: GTPase Obg (424 aa).

One can recognise an Obg domain in the interval methionine 1 to leucine 158. Residues alanine 159–lysine 330 form the OBG-type G domain. GTP is bound by residues glycine 165 to serine 172, phenylalanine 190 to asparagine 194, aspartate 212 to glycine 215, asparagine 282 to aspartate 285, and serine 311 to alanine 313. Residues serine 172 and threonine 192 each coordinate Mg(2+). The region spanning tyrosine 347–arginine 424 is the OCT domain.

The protein belongs to the TRAFAC class OBG-HflX-like GTPase superfamily. OBG GTPase family. Monomer. Mg(2+) is required as a cofactor.

The protein resides in the cytoplasm. An essential GTPase which binds GTP, GDP and possibly (p)ppGpp with moderate affinity, with high nucleotide exchange rates and a fairly low GTP hydrolysis rate. Plays a role in control of the cell cycle, stress response, ribosome biogenesis and in those bacteria that undergo differentiation, in morphogenesis control. The sequence is that of GTPase Obg from Acetivibrio thermocellus (strain ATCC 27405 / DSM 1237 / JCM 9322 / NBRC 103400 / NCIMB 10682 / NRRL B-4536 / VPI 7372) (Clostridium thermocellum).